A 667-amino-acid chain; its full sequence is UvrABC system protein B (667 aa).

The Helicase ATP-binding domain maps to 25–414 (TGLQRGDKHQ…GVVVEQIIRP (390 aa)). ATP is bound at residue 38–45 (GVTGSGKT). Positions 91-114 (YYDYYQPEAYVPTTDTFIEKDSSI) match the Beta-hairpin motif. One can recognise a Helicase C-terminal domain in the interval 430-596 (QVDDLIHEIR…TVKKSLRSIL (167 aa)). The UVR domain maps to 624–659 (KNEIARVKEEMLAAAANLEFEKAAELRDRMLELDKL).

Belongs to the UvrB family. Forms a heterotetramer with UvrA during the search for lesions. Interacts with UvrC in an incision complex.

Its subcellular location is the cytoplasm. In terms of biological role, the UvrABC repair system catalyzes the recognition and processing of DNA lesions. A damage recognition complex composed of 2 UvrA and 2 UvrB subunits scans DNA for abnormalities. Upon binding of the UvrA(2)B(2) complex to a putative damaged site, the DNA wraps around one UvrB monomer. DNA wrap is dependent on ATP binding by UvrB and probably causes local melting of the DNA helix, facilitating insertion of UvrB beta-hairpin between the DNA strands. Then UvrB probes one DNA strand for the presence of a lesion. If a lesion is found the UvrA subunits dissociate and the UvrB-DNA preincision complex is formed. This complex is subsequently bound by UvrC and the second UvrB is released. If no lesion is found, the DNA wraps around the other UvrB subunit that will check the other stand for damage. This is UvrABC system protein B from Syntrophotalea carbinolica (strain DSM 2380 / NBRC 103641 / GraBd1) (Pelobacter carbinolicus).